A 476-amino-acid polypeptide reads, in one-letter code: Glycogen synthase (476 aa).

Lysine 15 serves as a coordination point for ADP-alpha-D-glucose.

Belongs to the glycosyltransferase 1 family. Bacterial/plant glycogen synthase subfamily.

The enzyme catalyses [(1-&gt;4)-alpha-D-glucosyl](n) + ADP-alpha-D-glucose = [(1-&gt;4)-alpha-D-glucosyl](n+1) + ADP + H(+). It functions in the pathway glycan biosynthesis; glycogen biosynthesis. In terms of biological role, synthesizes alpha-1,4-glucan chains using ADP-glucose. The polypeptide is Glycogen synthase (Marinomonas sp. (strain MWYL1)).